Consider the following 222-residue polypeptide: Endonuclease V (222 aa).

Residues Asp-43 and Asp-109 each coordinate Mg(2+).

This sequence belongs to the endonuclease V family. Mg(2+) serves as cofactor.

The protein resides in the cytoplasm. The enzyme catalyses Endonucleolytic cleavage at apurinic or apyrimidinic sites to products with a 5'-phosphate.. In terms of biological role, DNA repair enzyme involved in the repair of deaminated bases. Selectively cleaves double-stranded DNA at the second phosphodiester bond 3' to a deoxyinosine leaving behind the intact lesion on the nicked DNA. In Roseiflexus sp. (strain RS-1), this protein is Endonuclease V.